The chain runs to 373 residues: Lipoyl synthase (373 aa).

The tract at residues 12-36 is disordered; the sequence is HVVSNDHPSSSPLQPGVKQSGEDKI. [4Fe-4S] cluster contacts are provided by C81, C86, C92, C107, C111, C114, and S323. Residues 93–312 enclose the Radical SAM core domain; sequence FSHGTATFMI…EEYGMALGFS (220 aa). Positions 346–373 are disordered; sequence PAVSSTEHRERHTIASKSASKTESIPHR. The segment covering 360-373 has biased composition (polar residues); it reads ASKSASKTESIPHR.

It belongs to the radical SAM superfamily. Lipoyl synthase family. The cofactor is [4Fe-4S] cluster.

It localises to the cytoplasm. It carries out the reaction [[Fe-S] cluster scaffold protein carrying a second [4Fe-4S](2+) cluster] + N(6)-octanoyl-L-lysyl-[protein] + 2 oxidized [2Fe-2S]-[ferredoxin] + 2 S-adenosyl-L-methionine + 4 H(+) = [[Fe-S] cluster scaffold protein] + N(6)-[(R)-dihydrolipoyl]-L-lysyl-[protein] + 4 Fe(3+) + 2 hydrogen sulfide + 2 5'-deoxyadenosine + 2 L-methionine + 2 reduced [2Fe-2S]-[ferredoxin]. It participates in protein modification; protein lipoylation via endogenous pathway; protein N(6)-(lipoyl)lysine from octanoyl-[acyl-carrier-protein]: step 2/2. Catalyzes the radical-mediated insertion of two sulfur atoms into the C-6 and C-8 positions of the octanoyl moiety bound to the lipoyl domains of lipoate-dependent enzymes, thereby converting the octanoylated domains into lipoylated derivatives. The sequence is that of Lipoyl synthase from Xylella fastidiosa (strain M12).